The sequence spans 556 residues: Peptide chain release factor 3 (556 aa).

The tr-type G domain occupies 28–297; that stretch reads QQRRNFAIIS…AFLDYALKPG (270 aa). GTP-binding positions include 37–44, 105–109, and 159–162; these read SHPDAGKT, DTPGH, and NKMD.

Belongs to the TRAFAC class translation factor GTPase superfamily. Classic translation factor GTPase family. PrfC subfamily.

Its subcellular location is the cytoplasm. Functionally, increases the formation of ribosomal termination complexes and stimulates activities of RF-1 and RF-2. It binds guanine nucleotides and has strong preference for UGA stop codons. It may interact directly with the ribosome. The stimulation of RF-1 and RF-2 is significantly reduced by GTP and GDP, but not by GMP. The protein is Peptide chain release factor 3 of Synechococcus sp. (strain ATCC 27144 / PCC 6301 / SAUG 1402/1) (Anacystis nidulans).